The primary structure comprises 253 residues: Ubiquinone biosynthesis O-methyltransferase (253 aa).

4 residues coordinate S-adenosyl-L-methionine: Arg-47, Gly-78, Asp-99, and Met-141.

It belongs to the methyltransferase superfamily. UbiG/COQ3 family.

The enzyme catalyses a 3-demethylubiquinol + S-adenosyl-L-methionine = a ubiquinol + S-adenosyl-L-homocysteine + H(+). It carries out the reaction a 3-(all-trans-polyprenyl)benzene-1,2-diol + S-adenosyl-L-methionine = a 2-methoxy-6-(all-trans-polyprenyl)phenol + S-adenosyl-L-homocysteine + H(+). It functions in the pathway cofactor biosynthesis; ubiquinone biosynthesis. Functionally, O-methyltransferase that catalyzes the 2 O-methylation steps in the ubiquinone biosynthetic pathway. The chain is Ubiquinone biosynthesis O-methyltransferase from Rhodopseudomonas palustris (strain BisB5).